We begin with the raw amino-acid sequence, 332 residues long: Putative symporter YfeH (332 aa).

This sequence belongs to the bile acid:sodium symporter (BASS) (TC 2.A.28) family.

The sequence is that of Putative symporter YfeH (yfeH) from Escherichia coli (strain K12).